We begin with the raw amino-acid sequence, 265 residues long: Thymidylate synthase (265 aa).

Arginine 21 lines the dUMP pocket. Residue histidine 51 coordinates (6R)-5,10-methylene-5,6,7,8-tetrahydrofolate. Residue 127–128 (RR) participates in dUMP binding. Residue cysteine 147 is the Nucleophile of the active site. Residues 167–170 (RSAD), asparagine 178, and 208–210 (HLY) contribute to the dUMP site. Aspartate 170 lines the (6R)-5,10-methylene-5,6,7,8-tetrahydrofolate pocket. Residue serine 264 participates in (6R)-5,10-methylene-5,6,7,8-tetrahydrofolate binding.

It belongs to the thymidylate synthase family. Bacterial-type ThyA subfamily. Homodimer.

It localises to the cytoplasm. It carries out the reaction dUMP + (6R)-5,10-methylene-5,6,7,8-tetrahydrofolate = 7,8-dihydrofolate + dTMP. The protein operates within pyrimidine metabolism; dTTP biosynthesis. Functionally, catalyzes the reductive methylation of 2'-deoxyuridine-5'-monophosphate (dUMP) to 2'-deoxythymidine-5'-monophosphate (dTMP) while utilizing 5,10-methylenetetrahydrofolate (mTHF) as the methyl donor and reductant in the reaction, yielding dihydrofolate (DHF) as a by-product. This enzymatic reaction provides an intracellular de novo source of dTMP, an essential precursor for DNA biosynthesis. This is Thymidylate synthase from Neisseria gonorrhoeae.